The primary structure comprises 421 residues: 4-hydroxy-3-methylbut-2-en-1-yl diphosphate synthase (flavodoxin) (421 aa).

[4Fe-4S] cluster-binding residues include cysteine 298, cysteine 301, cysteine 344, and glutamate 351.

It belongs to the IspG family. [4Fe-4S] cluster serves as cofactor.

It carries out the reaction (2E)-4-hydroxy-3-methylbut-2-enyl diphosphate + oxidized [flavodoxin] + H2O + 2 H(+) = 2-C-methyl-D-erythritol 2,4-cyclic diphosphate + reduced [flavodoxin]. The protein operates within isoprenoid biosynthesis; isopentenyl diphosphate biosynthesis via DXP pathway; isopentenyl diphosphate from 1-deoxy-D-xylulose 5-phosphate: step 5/6. Its function is as follows. Converts 2C-methyl-D-erythritol 2,4-cyclodiphosphate (ME-2,4cPP) into 1-hydroxy-2-methyl-2-(E)-butenyl 4-diphosphate. This is 4-hydroxy-3-methylbut-2-en-1-yl diphosphate synthase (flavodoxin) from Neisseria meningitidis serogroup B (strain ATCC BAA-335 / MC58).